A 164-amino-acid chain; its full sequence is Phosphopantetheine adenylyltransferase (164 aa).

Position 9 (Thr9) interacts with substrate. ATP is bound by residues 9–10 (TF) and His17. The substrate site is built by Lys41, Leu78, and Arg92. Residues 93-95 (GLR), Glu103, and 128-134 (RQAIASK) each bind ATP.

The protein belongs to the bacterial CoaD family. As to quaternary structure, homohexamer. The cofactor is Mg(2+).

Its subcellular location is the cytoplasm. The enzyme catalyses (R)-4'-phosphopantetheine + ATP + H(+) = 3'-dephospho-CoA + diphosphate. It functions in the pathway cofactor biosynthesis; coenzyme A biosynthesis; CoA from (R)-pantothenate: step 4/5. Its function is as follows. Reversibly transfers an adenylyl group from ATP to 4'-phosphopantetheine, yielding dephospho-CoA (dPCoA) and pyrophosphate. This is Phosphopantetheine adenylyltransferase from Paracoccus denitrificans (strain Pd 1222).